Consider the following 583-residue polypeptide: Aspartate--tRNA ligase (583 aa).

E173 contacts L-aspartate. The segment at 197–200 (QLFK) is aspartate. Residue R219 participates in L-aspartate binding. Residues 219–221 (RDE) and Q228 each bind ATP. H444 contacts L-aspartate. E478 contributes to the ATP binding site. R485 serves as a coordination point for L-aspartate. 530-533 (GLDR) is a binding site for ATP.

Belongs to the class-II aminoacyl-tRNA synthetase family. Type 1 subfamily. In terms of assembly, homodimer.

It is found in the cytoplasm. It catalyses the reaction tRNA(Asp) + L-aspartate + ATP = L-aspartyl-tRNA(Asp) + AMP + diphosphate. Its function is as follows. Catalyzes the attachment of L-aspartate to tRNA(Asp) in a two-step reaction: L-aspartate is first activated by ATP to form Asp-AMP and then transferred to the acceptor end of tRNA(Asp). This Azobacteroides pseudotrichonymphae genomovar. CFP2 protein is Aspartate--tRNA ligase.